Here is a 293-residue protein sequence, read N- to C-terminus: MATISAKLVKELREKTGAGMMDCKKALTETDGDIDKAIDYLREKGIAKAAKKADRIAAEGLVHVETKGNDAVIVEINSETDFVARNAGFQELVKEIANQVLDTKAETVEALMETTLPNGKSVDERIKEAISTIGEKLSVRRFAIRTKTDNDAFGAYLHMGGRIGVLTVVEGSTDEEAARDVAMHIAAINPKYVSSEQVSEEEINHEREVLKQQALNEGKPENIVEKMVEGRLRKYLQEICAVDQDFVKNPDVTVEAFLKTKGGKLVDFVRYEVGEGMEKREENFADEVKGQMK.

The tract at residues 80–83 is involved in Mg(2+) ion dislocation from EF-Tu; that stretch reads TDFV.

The protein belongs to the EF-Ts family.

It localises to the cytoplasm. Its function is as follows. Associates with the EF-Tu.GDP complex and induces the exchange of GDP to GTP. It remains bound to the aminoacyl-tRNA.EF-Tu.GTP complex up to the GTP hydrolysis stage on the ribosome. This Staphylococcus aureus (strain Newman) protein is Elongation factor Ts.